The following is an 854-amino-acid chain: Protein ROOT HAIR DEFECTIVE 3 homolog 1 (854 aa).

Topologically, residues 1–680 (MDEAAAAEAV…QAHKRGNGRL (680 aa)) are cytoplasmic. The region spanning 37–252 (GLSYAVVSIM…IAPGGLAGDR (216 aa)) is the GB1/RHD3-type G domain. Residue 47–54 (GPQSSGKS) participates in GTP binding. The stretch at 217–242 (ALPSFEEKEEQFREQVQQLRQRFSNS) forms a coiled coil. The chain crosses the membrane as a helical span at residues 681–701 (PPPWAMVAIAVLGFNEIMTLL). At 702–704 (RNP) the chain is on the lumenal side. A helical transmembrane segment spans residues 705-725 (IYLFLLFVGYLLVKALAVQLD). Over 726 to 854 (INREFQNGVV…NESNNAYSIV (129 aa)) the chain is Cytoplasmic. Composition is skewed to low complexity over residues 758 to 781 (TEQQ…QQQP) and 814 to 828 (VSPS…VTSP). The interval 758–854 (TEQQQQQGHH…NESNNAYSIV (97 aa)) is disordered. Residues 842–854 (QPDNESNNAYSIV) show a composition bias toward polar residues.

It belongs to the TRAFAC class dynamin-like GTPase superfamily. GB1/RHD3 GTPase family. RHD3 subfamily.

The protein resides in the endoplasmic reticulum membrane. Probable GTP-binding protein that may be involved in cell development. The polypeptide is Protein ROOT HAIR DEFECTIVE 3 homolog 1 (Oryza sativa subsp. japonica (Rice)).